Reading from the N-terminus, the 349-residue chain is Protein RecA (349 aa).

Position 67–74 (67–74) interacts with ATP; sequence GPESSGKT.

Belongs to the RecA family.

Its subcellular location is the cytoplasm. Its function is as follows. Can catalyze the hydrolysis of ATP in the presence of single-stranded DNA, the ATP-dependent uptake of single-stranded DNA by duplex DNA, and the ATP-dependent hybridization of homologous single-stranded DNAs. It interacts with LexA causing its activation and leading to its autocatalytic cleavage. The polypeptide is Protein RecA (Chlamydia abortus (strain DSM 27085 / S26/3) (Chlamydophila abortus)).